A 289-amino-acid polypeptide reads, in one-letter code: 4-diphosphocytidyl-2-C-methyl-D-erythritol kinase (289 aa).

Lys-10 is an active-site residue. 94–104 serves as a coordination point for ATP; sequence PVAAGLAGGSS. Asp-136 is an active-site residue.

Belongs to the GHMP kinase family. IspE subfamily.

It catalyses the reaction 4-CDP-2-C-methyl-D-erythritol + ATP = 4-CDP-2-C-methyl-D-erythritol 2-phosphate + ADP + H(+). It functions in the pathway isoprenoid biosynthesis; isopentenyl diphosphate biosynthesis via DXP pathway; isopentenyl diphosphate from 1-deoxy-D-xylulose 5-phosphate: step 3/6. Catalyzes the phosphorylation of the position 2 hydroxy group of 4-diphosphocytidyl-2C-methyl-D-erythritol. In Geobacillus sp. (strain WCH70), this protein is 4-diphosphocytidyl-2-C-methyl-D-erythritol kinase.